The sequence spans 431 residues: UDP-N-acetylmuramate--L-alanine ligase (431 aa).

108–114 (GAHGKST) serves as a coordination point for ATP.

This sequence belongs to the MurCDEF family.

The protein localises to the cytoplasm. The catalysed reaction is UDP-N-acetyl-alpha-D-muramate + L-alanine + ATP = UDP-N-acetyl-alpha-D-muramoyl-L-alanine + ADP + phosphate + H(+). Its pathway is cell wall biogenesis; peptidoglycan biosynthesis. In terms of biological role, cell wall formation. The chain is UDP-N-acetylmuramate--L-alanine ligase from Campylobacter jejuni subsp. doylei (strain ATCC BAA-1458 / RM4099 / 269.97).